The chain runs to 736 residues: Subtilisin-like protease SBT4.12 (736 aa).

Residues 1 to 24 (MANLAASTCLYSWLLVLLLSSVSA) form the signal peptide. The propeptide at 25-110 (IIDEDTQVYI…VFPNKILQLH (86 aa)) is activation peptide. In terms of domain architecture, Inhibitor I9 spans 32–110 (VYIVYMGSLS…VFPNKILQLH (79 aa)). The Peptidase S8 domain maps to 114-580 (SWDFMGVKEG…AGHVDPMAAL (467 aa)). Asp142 acts as the Charge relay system in catalysis. N-linked (GlcNAc...) asparagine glycosylation occurs at Asn173. The active-site Charge relay system is His197. N-linked (GlcNAc...) asparagine glycans are attached at residues Asn220, Asn381, and Asn459. The PA domain occupies 353-437 (KYPLVYGKSA…GLKAKDFKSL (85 aa)). The Charge relay system role is filled by Ser519. N-linked (GlcNAc...) asparagine glycans are attached at residues Asn601, Asn649, and Asn659.

The protein belongs to the peptidase S8 family. In terms of processing, the C-terminal propeptide is autocleaved. As to expression, specifically expressed in root stele of the root hair zone.

The protein localises to the secreted. The sequence is that of Subtilisin-like protease SBT4.12 from Arabidopsis thaliana (Mouse-ear cress).